The primary structure comprises 202 residues: Glycerol-3-phosphate acyltransferase (202 aa).

A run of 6 helical transmembrane segments spans residues 2-22 (MIVI…GYVI), 54-74 (FLVT…PLWL), 88-108 (NGLI…YLGF), 120-140 (VILG…FGIL), 141-161 (YLTK…VIGA), and 162-182 (LLIR…LLII).

Belongs to the PlsY family. Probably interacts with PlsX.

Its subcellular location is the cell membrane. It catalyses the reaction an acyl phosphate + sn-glycerol 3-phosphate = a 1-acyl-sn-glycero-3-phosphate + phosphate. The protein operates within lipid metabolism; phospholipid metabolism. Its function is as follows. Catalyzes the transfer of an acyl group from acyl-phosphate (acyl-PO(4)) to glycerol-3-phosphate (G3P) to form lysophosphatidic acid (LPA). This enzyme utilizes acyl-phosphate as fatty acyl donor, but not acyl-CoA or acyl-ACP. The polypeptide is Glycerol-3-phosphate acyltransferase (Staphylococcus saprophyticus subsp. saprophyticus (strain ATCC 15305 / DSM 20229 / NCIMB 8711 / NCTC 7292 / S-41)).